An 802-amino-acid polypeptide reads, in one-letter code: Outer membrane usher protein CssD (802 aa).

This sequence belongs to the fimbrial export usher family.

The protein localises to the cell outer membrane. Its function is as follows. Involved in the export and assembly of C6 fimbrial subunits across the outer membrane. This chain is Outer membrane usher protein CssD (cssD), found in Escherichia coli.